A 914-amino-acid chain; its full sequence is TRPM8 channel-associated factor 3 (914 aa).

Residues 533–832 (NSWVSTGLYL…TYLQLQEGFG (300 aa)) form the Peptidase M60 domain.

This sequence belongs to the TCAF family.

In terms of biological role, may play a role in the regulation of the cation channel TRPM8 activity. In Rattus norvegicus (Rat), this protein is TRPM8 channel-associated factor 3.